The following is a 203-amino-acid chain: Thymidylate kinase (203 aa).

Residue 9-16 participates in ATP binding; the sequence is GPEGSGKT.

This sequence belongs to the thymidylate kinase family.

The catalysed reaction is dTMP + ATP = dTDP + ADP. Its function is as follows. Phosphorylation of dTMP to form dTDP in both de novo and salvage pathways of dTTP synthesis. The sequence is that of Thymidylate kinase from Staphylococcus haemolyticus (strain JCSC1435).